A 486-amino-acid chain; its full sequence is E3 ubiquitin-protein ligase TRIM50 (486 aa).

Residues 16–57 (CPVCLEVFKEPLMLQCGHSYCKGCLLSLSRHLDSELRCPVCR) form an RING-type zinc finger. The B box-type zinc finger occupies 84-125 (PEPQVCTHHRNPLSLFCEKDQELICGLCGLLGSHQHHRVTPV). Zn(2+)-binding residues include Cys89, His92, Cys111, and His117. 2 coiled-coil regions span residues 125 to 170 (VSTV…ESDV) and 204 to 235 (LVASLDMQLEQARGAQERLAQATCMLEQFGNE). Residues 275 to 474 (DIKLTVWKRL…LPMVLPLPSG (200 aa)) form the B30.2/SPRY domain. Residue Lys372 is modified to N6-acetyllysine.

The protein belongs to the TRIM/RBCC family. In terms of assembly, can form dimers and trimers. Interacts with several E2 ubiquitin-conjugating enzymes, including UBE2L6, UBE2E1, UBE2E3. No interaction with UBE2H. Interacts with BECN1. Interacts with SQSTM1. Interacts with NLRP3. Post-translationally, auto-ubiquitinated. In terms of processing, acetylated by EP300 and KAT2B. HDAC6 drives TRIM50 deacetylation. Acetylation antagonizes with TRIM50 ubiquitination.

The protein localises to the cytoplasm. The catalysed reaction is S-ubiquitinyl-[E2 ubiquitin-conjugating enzyme]-L-cysteine + [acceptor protein]-L-lysine = [E2 ubiquitin-conjugating enzyme]-L-cysteine + N(6)-ubiquitinyl-[acceptor protein]-L-lysine.. In terms of biological role, E3 ubiquitin-protein ligase that ubiquitinates Beclin-1/BECN1 in a 'Lys-63'-dependent manner enhancing its binding to ULK1. In turn, promotes starvation-induced autophagy activation. Also interacts with p62/SQSTM1 protein and thereby induces the formation and the autophagy clearance of aggresome-associated polyubiquitinated proteins through HDAC6 interaction. Also promotes NLRP3 inflammasome activation by directly inducing NLRP3 oligomerization independent of its E3 ligase function. This Sus scrofa (Pig) protein is E3 ubiquitin-protein ligase TRIM50 (TRIM50).